A 466-amino-acid chain; its full sequence is Ras GTPase-activating protein-binding protein 1 (466 aa).

Positions 11–133 (VGREFVRQYY…FYVHNDIFRY (123 aa)) constitute an NTF2 domain. Residues Lys36, Lys50, Lys59, Lys64, Lys76, and Lys123 each participate in a glycyl lysine isopeptide (Lys-Gly) (interchain with G-Cter in ubiquitin) cross-link. Residues 142–225 (VTEPQEESEE…EPVLEETVPE (84 aa)) are acidic disordered region. Thr143 carries the phosphothreonine modification. Disordered regions lie at residues 144 to 172 (EPQE…DSGT) and 184 to 243 (EEHL…QTVQ). 2 stretches are compositionally biased toward acidic residues: residues 145–157 (PQEE…EEPE) and 185–206 (EHLE…EQEP). Residue Ser149 is modified to Phosphoserine. Phosphoserine occurs at positions 231, 232, 250, and 253. The disordered stretch occupies residues 255–329 (TSKNLPPSGA…REAGEQGDIE (75 aa)). Composition is skewed to basic and acidic residues over residues 297–307 (PQRDQRVREQR) and 318–329 (PIREAGEQGDIE). The region spanning 340–415 (HQLFIGNLPH…VRLNVEEKKT (76 aa)) is the RRM domain. Residues Lys353 and Lys357 each participate in a glycyl lysine isopeptide (Lys-Gly) (interchain with G-Cter in ubiquitin) cross-link. Ser373 is subject to Phosphoserine. Residue Lys376 forms a Glycyl lysine isopeptide (Lys-Gly) (interchain with G-Cter in ubiquitin) linkage. Lys376 is subject to N6-acetyllysine; alternate. Residue Lys376 forms a Glycyl lysine isopeptide (Lys-Gly) (interchain with G-Cter in SUMO2); alternate linkage. Lys393 participates in a covalent cross-link: Glycyl lysine isopeptide (Lys-Gly) (interchain with G-Cter in ubiquitin); alternate. The RG-rich region stretch occupies residues 410 to 466 (VEEKKTRAAREGDRRDNRLRGPGGPRGGLGGGMRGPPRGGMVQKPGFGVGRGLAPRQ). Basic and acidic residues predominate over residues 413-428 (KKTRAAREGDRRDNRL). The tract at residues 413–466 (KKTRAAREGDRRDNRLRGPGGPRGGLGGGMRGPPRGGMVQKPGFGVGRGLAPRQ) is disordered. An Asymmetric dimethylarginine modification is found at Arg429. A compositionally biased stretch (gly residues) spans 430–447 (GPGGPRGGLGGGMRGPPR). Arg435 carries the asymmetric dimethylarginine; alternate modification. Arg435, Arg447, Arg460, and Arg465 each carry omega-N-methylarginine; alternate. Arg460 is subject to Dimethylated arginine; alternate.

In terms of assembly, homodimer and oligomer. Component of a TAU mRNP complex, at least composed of IGF2BP1, ELAVL4 and G3BP1. Binds to the SH3 domain of Ras GTPase-activating protein (RASA1) in proliferating cells. No interaction in quiescent cells. Interacts (via NTF2 domain) with USP10; inhibiting stress granule formation by lowering G3BP1 valence. Interacts (via NTF2 domain) with CAPRIN1; promoting stress granule formation by lowering the saturation-concentration of G3BP1. Interacts (via NTF2 domain) with UBAP2L; promoting stress granule formation. Associates (via RG-rich region) with 40S ribosome subunits. Interacts with RPTOR and SPAG5; this complex is increased by oxidative stress. Interacts with ATXN2L. Interacts with STYXL1. Interacts with CGAS (via N-terminus); this interaction promotes the DNA-binding and activation of CGAS. Interacts (via C-terminus) with RIGI. Interacts with PABPC1. Interacts with QKI (isoforms QKI6 and QKI7); directing N(7)-methylguanine-containing mRNAs to stress granules. It depends on Mg(2+) as a cofactor. Phosphorylation of the acidic disordered region regulates stress granule assembly. RASA1-dependent phosphorylation of Ser-149 induces a conformational change that prevents self-association. Dephosphorylation after HRAS activation is required for stress granule assembly. Ser-149 phosphorylation induces partial nuclear localization. In terms of processing, arg-435 is dimethylated, probably to asymmetric dimethylarginine. Post-translationally, ubiquitinated by TRIM21 via 'Lys-63'-linked polyubiquitination in the NTF2 domain in response to heat shock, leading to stress granule disassembly: ubiquitination promotes interaction with the FAF2 adapter, followed by interaction with VCP, which extracts G3BP1 from stress granules, leading to stress granule disassembly. In case of prolonged stress, ubiquitination by TRIM21 leads to autophagy-dependent degradation of G3BP1 via recruitment of ubiquitinated G3BP1 by SQSTM1 and/or CALCOCO2 to autophagosomes.

It is found in the cytoplasm. It localises to the cytosol. Its subcellular location is the perikaryon. The protein resides in the stress granule. The protein localises to the nucleus. The catalysed reaction is ATP + H2O = ADP + phosphate + H(+). Its activity is regulated as follows. Under physiological conditions, G3BP1 adopts a compact state that is stabilized by intramolecular interactions between the RG-rich and the acidic regions that inhibit phase separation. Upon stress, polysomes disassemble and mRNAs are released in an unfolded protein-free state. Binding of unfolded mRNA to G3BP1 outcompetes the intramolecular interactions and RNA-bound G3BP1 adopts an expanded conformation in which the RG-rich region becomes exposed to engage in protein-protein and protein-RNA interactions, allowing physical cross-linking of RNA molecules to form protein-RNA condensates, leading to liquid-liquid phase separation (LLPS). Its function is as follows. Protein involved in various processes, such as stress granule formation and innate immunity. Plays an essential role in stress granule formation. Stress granules are membraneless compartments that store mRNAs and proteins, such as stalled translation pre-initiation complexes, in response to stress. Promotes formation of stress granules phase-separated membraneless compartment by undergoing liquid-liquid phase separation (LLPS) upon unfolded RNA-binding: functions as a molecular switch that triggers RNA-dependent LLPS in response to a rise in intracellular free RNA concentrations. Also acts as an ATP- and magnesium-dependent helicase: unwinds DNA/DNA, RNA/DNA, and RNA/RNA substrates with comparable efficiency. Acts unidirectionally by moving in the 5' to 3' direction along the bound single-stranded DNA. Unwinds preferentially partial DNA and RNA duplexes having a 17 bp annealed portion and either a hanging 3' tail or hanging tails at both 5'- and 3'-ends. Plays an essential role in innate immunity by promoting CGAS and RIGI activity. Participates in the DNA-triggered cGAS/STING pathway by promoting the DNA binding and activation of CGAS. Triggers the condensation of cGAS, a process probably linked to the formation of membrane-less organelles. Also enhances RIGI-induced type I interferon production probably by helping RIGI at sensing pathogenic RNA. May also act as a phosphorylation-dependent sequence-specific endoribonuclease in vitro: Cleaves exclusively between cytosine and adenine and cleaves MYC mRNA preferentially at the 3'-UTR. The protein is Ras GTPase-activating protein-binding protein 1 (G3BP1) of Pongo abelii (Sumatran orangutan).